The primary structure comprises 460 residues: ATP synthase subunit beta (460 aa).

An ATP-binding site is contributed by 149 to 156 (GGAGVGKT).

This sequence belongs to the ATPase alpha/beta chains family. In terms of assembly, F-type ATPases have 2 components, CF(1) - the catalytic core - and CF(0) - the membrane proton channel. CF(1) has five subunits: alpha(3), beta(3), gamma(1), delta(1), epsilon(1). CF(0) has three main subunits: a(1), b(2) and c(9-12). The alpha and beta chains form an alternating ring which encloses part of the gamma chain. CF(1) is attached to CF(0) by a central stalk formed by the gamma and epsilon chains, while a peripheral stalk is formed by the delta and b chains.

The protein resides in the cell inner membrane. The catalysed reaction is ATP + H2O + 4 H(+)(in) = ADP + phosphate + 5 H(+)(out). In terms of biological role, produces ATP from ADP in the presence of a proton gradient across the membrane. The catalytic sites are hosted primarily by the beta subunits. This chain is ATP synthase subunit beta, found in Nitrosomonas europaea (strain ATCC 19718 / CIP 103999 / KCTC 2705 / NBRC 14298).